A 660-amino-acid polypeptide reads, in one-letter code: UvrABC system protein C (660 aa).

The region spanning 16–95 (ESPGVYRFRD…IKQYDPRFNV (80 aa)) is the GIY-YIG domain. The region spanning 208-243 (DAMVRRLEREMAEASAELEFERAARLRDDLAALRRA) is the UVR domain. A disordered region spans residues 469–501 (GEAGVESAGDPDAPAGPDAPDEPRVGTLVDPTT). A compositionally biased stretch (low complexity) spans 476–486 (AGDPDAPAGPD).

It belongs to the UvrC family. As to quaternary structure, interacts with UvrB in an incision complex.

It is found in the cytoplasm. Functionally, the UvrABC repair system catalyzes the recognition and processing of DNA lesions. UvrC both incises the 5' and 3' sides of the lesion. The N-terminal half is responsible for the 3' incision and the C-terminal half is responsible for the 5' incision. This is UvrABC system protein C from Salinispora arenicola (strain CNS-205).